A 1001-amino-acid polypeptide reads, in one-letter code: Serine/threonine-protein kinase TAO1-A (1001 aa).

The Protein kinase domain occupies 28-281 (FSDLREIGHG…SDELLKNMFV (254 aa)). ATP is bound by residues 34-42 (IGHGSFGAV) and Lys-57. The active-site Proton acceptor is Asp-151. Disordered regions lie at residues 324 to 431 (PAVE…HKSH) and 567 to 586 (KEELNENQSTPKKEKQEWLS). Residues 350–370 (SNQSIPSMSISASSQSSSVTS) show a composition bias toward low complexity. Composition is skewed to basic and acidic residues over residues 375–388 (SDDKSELDMMEGDH) and 577–586 (PKKEKQEWLS). 2 coiled-coil regions span residues 458–651 (SELR…EHAM) and 754–877 (KAVL…EIEA). The tract at residues 911–1001 (SHNPTGGPGP…ISNGSRMSYT (91 aa)) is disordered. Residues 921–930 (HWGHPMAGPP) are compositionally biased toward low complexity. Polar residues-rich tracts occupy residues 949 to 967 (GSVQGVSRGSTMGVRNSPQ) and 974 to 1001 (SGGQTEQGMSRSTSVTSQISNGSRMSYT).

The protein belongs to the protein kinase superfamily. STE Ser/Thr protein kinase family. STE20 subfamily.

The protein resides in the cytoplasm. It catalyses the reaction L-seryl-[protein] + ATP = O-phospho-L-seryl-[protein] + ADP + H(+). It carries out the reaction L-threonyl-[protein] + ATP = O-phospho-L-threonyl-[protein] + ADP + H(+). Its function is as follows. Serine/threonine-protein kinase involved in various processes such as p38/mapk14 stress-activated MAPK cascade, DNA damage response and regulation of cytoskeleton stability. Acts as an activator of the p38/MAPK14 stress-activated MAPK cascade by mediating phosphorylation and subsequent activation of upstream MAP kinase kinases. In response to DNA damage, involved in the G2/M transition DNA damage checkpoint by activating the p38/MAPK14 stress-activated MAPK cascade. In Xenopus laevis (African clawed frog), this protein is Serine/threonine-protein kinase TAO1-A (taok1-a).